Here is a 99-residue protein sequence, read N- to C-terminus: DNA-binding protein HU (99 aa).

Residues 63-82 (HRKEREGRNPKTGAKMKIDA) are disordered.

The protein belongs to the bacterial histone-like protein family. In terms of assembly, homodimer.

In terms of biological role, histone-like DNA-binding protein which is capable of wrapping DNA to stabilize it, and thus to prevent its denaturation under extreme environmental conditions. The chain is DNA-binding protein HU (hup) from Rickettsia prowazekii (strain Madrid E).